Consider the following 182-residue polypeptide: Protein Syd (182 aa).

Belongs to the Syd family.

The protein localises to the cell inner membrane. In terms of biological role, interacts with the SecY protein in vivo. May bind preferentially to an uncomplexed state of SecY, thus functioning either as a chelating agent for excess SecY in the cell or as a regulatory factor that negatively controls the translocase function. This Pectobacterium atrosepticum (strain SCRI 1043 / ATCC BAA-672) (Erwinia carotovora subsp. atroseptica) protein is Protein Syd.